The chain runs to 394 residues: ORC1-type DNA replication protein 3 (394 aa).

ATP-binding positions include 66 to 70 (TGKTF) and Tyr-207.

Belongs to the CDC6/cdc18 family. In terms of assembly, monomer. Interacts with Cdc6-1, Cdc6-2, MCM and PolB1.

Involved in regulation of DNA replication. May play essential roles in origin recognition and cell cycle control of replication. Binds to DNA, with a preference for molecules that contain a bubble, a fork, or a tail. Inhibits the binding of the MCM helicase to the origin DNA and inhibits its DNA helicase activity. Also regulates the DNA polymerase and the nuclease activities of PolB1. Inhibits the DNA-binding activity of Cdc6-1 and Cdc6-2. This chain is ORC1-type DNA replication protein 3 (cdc6-3), found in Saccharolobus solfataricus (strain ATCC 35092 / DSM 1617 / JCM 11322 / P2) (Sulfolobus solfataricus).